Here is a 2110-residue protein sequence, read N- to C-terminus: Tenascin (2110 aa).

An N-terminal signal peptide occupies residues 1–22 (MGAVTWLLPGIFLALFALTPEG). A glycan (N-linked (GlcNAc...) asparagine) is linked at N38. Phosphoserine occurs at positions 65, 70, and 72. Residues 69 to 91 (ESASGEKDLTPTPESSGSFQEHT) are disordered. S72 is a glycosylation site (O-linked (Xyl...) (chondroitin sulfate) serine). A compositionally biased stretch (polar residues) spans 80 to 89 (TPESSGSFQE). A coiled-coil region spans residues 118–142 (DVKELLSRLEELELLVSSLREQCTM). 2 N-linked (GlcNAc...) asparagine glycosylation sites follow: N166 and N184. Residues 174–185 (CVCEPGWKGPNC) enclose the EGF-like 1; incomplete domain. 14 consecutive EGF-like domains span residues 186-216 (SEPD…GEDC), 217-247 (SQLA…GPDC), 248-279 (GLEV…GEDC), 280-310 (NEPL…GEDC), 311-341 (SELI…GEDC), 342-372 (GELT…GADC), 373-403 (SEKR…GADC), 404-434 (GDLQ…GEDC), 435-465 (SQRR…GFDC), 466-496 (SEMS…GEDC), 497-527 (RDRR…GPDC), 528-558 (AELS…GKDC), 559-589 (KEQR…GLDC), and 590-621 (GQRS…IDCS). Disulfide bonds link C190-C200, C194-C205, C207-C216, C221-C231, C225-C236, C238-C247, C252-C263, C256-C268, C270-C279, C284-C294, C288-C299, C301-C310, C315-C325, C319-C330, C332-C341, C346-C356, C350-C361, C363-C372, C377-C387, C381-C392, C394-C403, C408-C418, C412-C423, C425-C434, C439-C449, C443-C454, C456-C465, C470-C480, C474-C485, C487-C496, C501-C511, C505-C516, C518-C527, C532-C542, C536-C547, C549-C558, C563-C573, C567-C578, C580-C589, C594-C604, C598-C609, and C611-C620. An N-linked (GlcNAc...) asparagine glycan is attached at N327. Fibronectin type-III domains are found at residues 625–715 (PPKD…LPAP), 716–804 (EGLK…TRLD), 805–894 (APSH…TGLD), 895–988 (APRN…IDAP), 989–1077 (KDLR…VPSL), 1078–1165 (ENLT…TGTT), 1167–1259 (NLGE…LPQL), 1260–1348 (GGLS…AREP), 1349–1440 (EIGN…ALPL), 1442–1530 (ENLT…EAEP), 1531–1620 (EVDN…TAMG), 1621–1710 (SPKE…ALDG), 1711–1797 (PSGL…TDLD), and 1798–1886 (SPRE…IGLL). N788 carries an N-linked (GlcNAc...) asparagine glycan. T905 carries the post-translational modification Phosphothreonine. N-linked (GlcNAc...) asparagine glycans are attached at residues N1018, N1079, N1093, N1119, N1184, N1210, N1275, N1301, N1354, N1364, N1394, and N1443. An N-linked (GlcNAc...) asparagine glycan is attached at N1718. The 216-residue stretch at 1884 to 2099 (GLLYPFPRDC…FAEMKLRPSN (216 aa)) folds into the Fibrinogen C-terminal domain. N-linked (GlcNAc...) asparagine glycans are attached at residues N1969 and N2071.

This sequence belongs to the tenascin family. As to quaternary structure, homohexamer; disulfide-linked. A homotrimer may be formed in the triple coiled-coil region and may be stabilized by disulfide rings at both ends. Two of such half-hexabrachions may be disulfide linked within the central globule. Interacts with CSPG4. Interacts (via the 3rd fibronectin type-III domain) with integrin ITGA9:ITGB1. Post-translationally, N-glycosylated. As to expression, expressed in the corneal limbus, the periosteum and the rib molecular layer of the cerebellum, the matrix of kidney tubules, blood vessels, stomach and intestine (at protein level). In terms of tissue distribution, weakly expressed in the brain. Highly expressed in the thymus and moderately expressed in the brain.

The protein resides in the secreted. Its subcellular location is the extracellular space. The protein localises to the extracellular matrix. Extracellular matrix protein implicated in guidance of migrating neurons as well as axons during development, synaptic plasticity as well as neuronal regeneration. Promotes neurite outgrowth when provided to neurons in culture. May play a role in supporting the growth of epithelial tumors. Ligand for integrins ITGA8:ITGB1, ITGA9:ITGB1, ITGAV:ITGB3 and ITGAV:ITGB6. In tumors, stimulates angiogenesis by elongation, migration and sprouting of endothelial cells. This is Tenascin from Mus musculus (Mouse).